Consider the following 2527-residue polypeptide: Highly reducing polyketide synthase poxF (2527 aa).

The region spanning V20–S445 is the Ketosynthase family 3 (KS3) domain. Catalysis depends on for beta-ketoacyl synthase activity residues C193, H328, and H368. Residues V560–Q882 form a malonyl-CoA:ACP transacylase (MAT) domain region. Residues H951–Q1086 are N-terminal hotdog fold. The tract at residues H951–T1243 is dehydratase (DH) domain. One can recognise a PKS/mFAS DH domain in the interval H951–V1270. Catalysis depends on H983, which acts as the Proton acceptor; for dehydratase activity. A C-terminal hotdog fold region spans residues A1108–V1270. The active-site Proton donor; for dehydratase activity is the D1174. Residues E1406–P1587 form a methyltransferase (CMet) domain region. Positions G1823–L2137 are enoyl reductase (ER) (ER) domain. The segment at T2162–S2339 is ketoreductase (KR) domain. The region spanning E2445 to S2522 is the Carrier domain. S2482 is subject to O-(pantetheine 4'-phosphoryl)serine.

It participates in secondary metabolite biosynthesis. Its function is as follows. Highly reducing polyketide synthase; part of the gene cluster that mediates the biosynthesis of oxaleimides, cytotoxic compounds containing an unusual disubstituted succinimide moiety. The first step of the pathway is provided by the HR-PKS poxF that serves in a new mode of collaborative biosynthesis with the PKS-NRPS poxE, by providing the olefin containing amino acid substrate via the synthesis of an ACP-bound dec-4-enoate. The cytochrome P450 monooxygenase poxM-catalyzed oxidation at the alpha-position creates the enzyme-bound 2-hydroxydec-4-enoyl-ACP thioester, which may be prone to spontaneous hydrolysis to yield 2-hydroxydec-4-enoic acid due to increased electrophilicity of the carbonyl. 2-hydroxydec-4-enoic acid can then be further oxidized by poxM to yield the alpha-ketoacid 2-oxodec-4-enoicacid, which is reductively aminated by the aminotransferase poxL to yield (S,E)-2-aminodec-4-enoic acid. The Hybrid PKS-NRPS synthetase poxE then performs condensation between the octaketide product of its PKS modules and the amino group of (S,E)-2-aminodec-4-enoic acid which is activated and incorporated by the adenylation domain. The resulting aminoacyl product can be cyclized by the Diels-Alderase PoxQ and reductively released by the reductive (R) domain of poxE to yield an aldehyde intermediate. The released aldehyde is then substrate for a Knoevenagel condensation by the hydrolyase poxO followed by an oxidation at the 5-position of the pyrrolidone ring. The presence of the olefin from the amino acid building block allows for migration of the substituted allyl group to occur. This allylic transposition reaction takes place in a conjugate addition, semipinacol-like fashion to yield a succinimide intermediate. Iterative two-electron oxidations of the C7 methyl of the succinimide intermediate to the carboxylic acid can be catalyzed by one of two remaining cytochrome P450 monooxygenasess poxC or poxD to yield oxaleimide A. Subsequent oxidation yields the maleimide scaffold oxaleimide I. Both oxaleimide A and oxaleimide I can undergo oxidative modifications in the decalin ring to yield the series of products oxaleimides B to H. The polypeptide is Highly reducing polyketide synthase poxF (Penicillium oxalicum).